The primary structure comprises 215 residues: Probable transaldolase (215 aa).

Lysine 83 serves as the catalytic Schiff-base intermediate with substrate.

This sequence belongs to the transaldolase family. Type 3B subfamily.

The protein localises to the cytoplasm. It carries out the reaction D-sedoheptulose 7-phosphate + D-glyceraldehyde 3-phosphate = D-erythrose 4-phosphate + beta-D-fructose 6-phosphate. It participates in carbohydrate degradation; pentose phosphate pathway; D-glyceraldehyde 3-phosphate and beta-D-fructose 6-phosphate from D-ribose 5-phosphate and D-xylulose 5-phosphate (non-oxidative stage): step 2/3. Its function is as follows. Transaldolase is important for the balance of metabolites in the pentose-phosphate pathway. The protein is Probable transaldolase of Bdellovibrio bacteriovorus (strain ATCC 15356 / DSM 50701 / NCIMB 9529 / HD100).